The following is a 78-amino-acid chain: Beta-defensin 105A (78 aa).

Positions 1–27 (MALIRKTFYFVFAVFFILVQQPSGCQA) are cleaved as a signal peptide. Intrachain disulfides connect cysteine 43–cysteine 74, cysteine 53–cysteine 67, and cysteine 57–cysteine 73.

Belongs to the beta-defensin family.

Its subcellular location is the secreted. Functionally, has antimicrobial activity. The protein is Beta-defensin 105A (DEFB105A) of Macaca fascicularis (Crab-eating macaque).